Consider the following 816-residue polypeptide: MKSREIEYFMEEIKDTVSKEKKRSKNSGGILPHFDKPVRVPLIAVPSHPVFPSMFIPIVIVSDIDMKAVDYVIKGNGIISLFVLRDKFLEKSGNNKDGKLTINYQKDIYSVGVTAKIVKKINLPDGGYNIFVSTIDRVKFVKVVLNEDFPIIEVDYLKQIPIKKYDVNLKAIYSSILLKTKEIFSHRKMPEFQLNMVNIEDKGRLCDVVAGMIASSKESHQEVLETLSVKDRLKKVLELLYEELNLIEIQNKIAKGIQEKLEKQQKEFFLKEQLKAIKTELGVGDEKNSEFLKMKSKIDALALKGEALDAVGRELEKFSFLERHSSEYIVVRNYLELITNLPWEDTKVDFDKFNLQRAEKILDKTHYGMREVKDRILEYISVLKLRKSQKGAIMLLVGPPGVGKTSIGAAIAEVLNTKFFRFSVGGIRDESEIKGHRRTYVGALPGKIIQGLRITKTNSPVFLIDEIDKVSSSHYGDPFSVLLEVLDPEQNVNFRDHYLDLPFDISNVFFILTANSLETIPTPLLNRMEVIQLSGYVDDEKIEIARKYLIPKVLKENGVDKDSLKFQSSSLVQIAREYARDNGLRNFEKYLKQIVRKIARKLVEDQSVKAYQISKENLEEYIGIPVFRKEKFLDKAMSPGMVMGLAWTNYGGSTLIIETVKTESKSPGIKLTGRLGDVMKESANIAFTYVNSISNELKVHKSFFEKYMIHLHIPEGATPKDGPSAGITIASAFISLALNKTVRPNLAMTGELSLTGNVMAIGGLKAKIIAAKRNGVEHIIIPKANKVDLDDIPINIKNGINFHLVDSMKEVIKLLF.

Residues 40–244 enclose the Lon N-terminal domain; that stretch reads VPLIAVPSHP…KVLELLYEEL (205 aa). 398–405 is a binding site for ATP; that stretch reads GPPGVGKT. Positions 636 to 816 constitute a Lon proteolytic domain; sequence AMSPGMVMGL…SMKEVIKLLF (181 aa). Active-site residues include serine 724 and lysine 767.

Belongs to the peptidase S16 family. Homohexamer. Organized in a ring with a central cavity.

It is found in the cytoplasm. It catalyses the reaction Hydrolysis of proteins in presence of ATP.. In terms of biological role, ATP-dependent serine protease that mediates the selective degradation of mutant and abnormal proteins as well as certain short-lived regulatory proteins. Required for cellular homeostasis and for survival from DNA damage and developmental changes induced by stress. Degrades polypeptides processively to yield small peptide fragments that are 5 to 10 amino acids long. Binds to DNA in a double-stranded, site-specific manner. This Borrelia duttonii (strain Ly) protein is Lon protease.